Reading from the N-terminus, the 86-residue chain is Putative regulatory protein BBR47_37350 (86 aa).

It belongs to the RemA family.

The polypeptide is Putative regulatory protein BBR47_37350 (Brevibacillus brevis (strain 47 / JCM 6285 / NBRC 100599)).